Consider the following 521-residue polypeptide: MIKQALISVSDKTGIVDFAKSLSDLGVKLLSTGGTAKLLADAGLPVTEVADYTGFPEMLDGRVKTLHPKVHGGILARRDLPEHMQALEQHGIPTIDLLVVNLYPFVATIAKDDCTLADAIENIDIGGPTMLRSAAKNHRDVTVVVDPADYAVVLDEMKANGNTVGYPTNFRLATKVFAHTAQYDGAITNYLTSLTDELKHASRSAYPATLNLAFDKVQDLRYGENPHQSAAFYRDLAAPAGALANYRQLQGKELSYNNIADSDAAWECVKTFDAPACVIIKHANPCGVAVGNDSADAYAKAFQTDPTSAFGGIIAFNREVDEAAAQAVAKQFVEVLIAPSFSDAAKQVFAAKQNVRLLEIALGDGHNAFDLKRVGGGLLVQSLDSKNVQPHELRVVTKRHPTPKEMDDLLFAWRVAKYVKSNAIVFCGNGMTLGVGAGQMSRVDSARIASIKAQNAGLTLTGSAVASDAFFPFRDGLDVVVAAGATCVIQPGGSMRDDEVIAAADEHNIAMILTGVRHFRH.

An MGS-like domain is found at Met-1 to Val-145.

This sequence belongs to the PurH family.

The catalysed reaction is (6R)-10-formyltetrahydrofolate + 5-amino-1-(5-phospho-beta-D-ribosyl)imidazole-4-carboxamide = 5-formamido-1-(5-phospho-D-ribosyl)imidazole-4-carboxamide + (6S)-5,6,7,8-tetrahydrofolate. The enzyme catalyses IMP + H2O = 5-formamido-1-(5-phospho-D-ribosyl)imidazole-4-carboxamide. Its pathway is purine metabolism; IMP biosynthesis via de novo pathway; 5-formamido-1-(5-phospho-D-ribosyl)imidazole-4-carboxamide from 5-amino-1-(5-phospho-D-ribosyl)imidazole-4-carboxamide (10-formyl THF route): step 1/1. It functions in the pathway purine metabolism; IMP biosynthesis via de novo pathway; IMP from 5-formamido-1-(5-phospho-D-ribosyl)imidazole-4-carboxamide: step 1/1. This is Bifunctional purine biosynthesis protein PurH from Burkholderia cenocepacia (strain ATCC BAA-245 / DSM 16553 / LMG 16656 / NCTC 13227 / J2315 / CF5610) (Burkholderia cepacia (strain J2315)).